The primary structure comprises 495 residues: Glycerol kinase (495 aa).

Thr-11 is an ADP binding site. Thr-11, Thr-12, and Ser-13 together coordinate ATP. Thr-11 provides a ligand contact to sn-glycerol 3-phosphate. Residue Arg-15 participates in ADP binding. The sn-glycerol 3-phosphate site is built by Arg-81, Glu-82, Tyr-133, and Asp-242. Glycerol contacts are provided by Arg-81, Glu-82, Tyr-133, Asp-242, and Gln-243. Positions 264 and 307 each coordinate ADP. Positions 264, 307, 311, and 408 each coordinate ATP. ADP is bound by residues Gly-408 and Asn-412.

The protein belongs to the FGGY kinase family.

The enzyme catalyses glycerol + ATP = sn-glycerol 3-phosphate + ADP + H(+). Its pathway is polyol metabolism; glycerol degradation via glycerol kinase pathway; sn-glycerol 3-phosphate from glycerol: step 1/1. Inhibited by fructose 1,6-bisphosphate (FBP). Its function is as follows. Key enzyme in the regulation of glycerol uptake and metabolism. Catalyzes the phosphorylation of glycerol to yield sn-glycerol 3-phosphate. The sequence is that of Glycerol kinase from Alkalilimnicola ehrlichii (strain ATCC BAA-1101 / DSM 17681 / MLHE-1).